A 241-amino-acid polypeptide reads, in one-letter code: Uridylate kinase (241 aa).

15 to 18 (KLSG) serves as a coordination point for ATP. Residues 23 to 28 (GTEGFG) form an involved in allosteric activation by GTP region. Position 57 (Gly57) interacts with UMP. Positions 58 and 62 each coordinate ATP. UMP-binding positions include Asp77 and 138 to 145 (TGNPFFTT). Residues Thr165, Phe171, and Asp174 each contribute to the ATP site.

It belongs to the UMP kinase family. As to quaternary structure, homohexamer.

It is found in the cytoplasm. The enzyme catalyses UMP + ATP = UDP + ADP. It functions in the pathway pyrimidine metabolism; CTP biosynthesis via de novo pathway; UDP from UMP (UMPK route): step 1/1. With respect to regulation, allosterically activated by GTP. Inhibited by UTP. Functionally, catalyzes the reversible phosphorylation of UMP to UDP. This is Uridylate kinase from Salmonella choleraesuis (strain SC-B67).